The sequence spans 176 residues: Protein MAL2 (176 aa).

Residues 1-34 (MSAGGASVPPPPNPAVSFPPPRVTLPAGPDILRT) lie on the Cytoplasmic side of the membrane. Residues 31-175 (ILRTYSGAFV…SLGLALRRWR (145 aa)) enclose the MARVEL domain. A helical membrane pass occupies residues 35-55 (YSGAFVCLEILFGGLVWILVA). The Lumenal portion of the chain corresponds to 56–66 (SSNVPLPLLQG). Residues 67 to 87 (WVMFVSVTAFFFSLLFLGMFL) traverse the membrane as a helical segment. The Cytoplasmic segment spans residues 88 to 102 (SGMVAQIDANWNFLD). Residues 103 to 123 (FAYHFTVFVFYFGAFLLEAAA) traverse the membrane as a helical segment. The Lumenal segment spans residues 124–149 (TSLHDLHCNTTITGQPLLSDNQYNIN). Asn-132 is a glycosylation site (N-linked (GlcNAc...) asparagine). A helical transmembrane segment spans residues 150–170 (VAASIFAFMTTACYGCSLGLA). Topologically, residues 171 to 176 (LRRWRP) are cytoplasmic.

It belongs to the MAL family. In terms of assembly, interacts with TPD52L2. As to expression, predominantly expressed in kidney, lung, and liver. Also found in thyroid gland, stomach and, at lower levels in testis and small intestine.

It is found in the cell membrane. It localises to the apical cell membrane. The protein resides in the endomembrane system. Its subcellular location is the cytoplasm. The protein localises to the perinuclear region. Functionally, member of the machinery of polarized transport. Required for the indirect transcytotic route at the step of the egress of the transcytosing cargo from perinuclear endosomes in order for it to travel to the apical surface via a raft-dependent pathway. The polypeptide is Protein MAL2 (MAL2) (Homo sapiens (Human)).